Reading from the N-terminus, the 913-residue chain is Isoleucine--tRNA ligase (913 aa).

A 'HIGH' region motif is present at residues 57–67 (PYANGDIHLGT). Glutamate 549 contributes to the L-isoleucyl-5'-AMP binding site. A 'KMSKS' region motif is present at residues 590 to 594 (KMSKS). Lysine 593 serves as a coordination point for ATP. Residues cysteine 881, cysteine 884, cysteine 901, and cysteine 904 each coordinate Zn(2+).

The protein belongs to the class-I aminoacyl-tRNA synthetase family. IleS type 1 subfamily. As to quaternary structure, monomer. Zn(2+) is required as a cofactor.

The protein localises to the cytoplasm. The catalysed reaction is tRNA(Ile) + L-isoleucine + ATP = L-isoleucyl-tRNA(Ile) + AMP + diphosphate. In terms of biological role, catalyzes the attachment of isoleucine to tRNA(Ile). As IleRS can inadvertently accommodate and process structurally similar amino acids such as valine, to avoid such errors it has two additional distinct tRNA(Ile)-dependent editing activities. One activity is designated as 'pretransfer' editing and involves the hydrolysis of activated Val-AMP. The other activity is designated 'posttransfer' editing and involves deacylation of mischarged Val-tRNA(Ile). This is Isoleucine--tRNA ligase from Fervidobacterium nodosum (strain ATCC 35602 / DSM 5306 / Rt17-B1).